We begin with the raw amino-acid sequence, 233 residues long: Zinc import ATP-binding protein ZnuC (233 aa).

The 217-residue stretch at I6–L222 folds into the ABC transporter domain. G38–T45 lines the ATP pocket.

The protein belongs to the ABC transporter superfamily. Zinc importer (TC 3.A.1.15.5) family. In terms of assembly, the complex is composed of two ATP-binding proteins (ZnuC), two transmembrane proteins (ZnuB) and a solute-binding protein (ZnuA).

It is found in the cell inner membrane. The catalysed reaction is Zn(2+)(out) + ATP(in) + H2O(in) = Zn(2+)(in) + ADP(in) + phosphate(in) + H(+)(in). Its function is as follows. Part of the ABC transporter complex ZnuABC involved in zinc import. Responsible for energy coupling to the transport system. This is Zinc import ATP-binding protein ZnuC from Rickettsia conorii (strain ATCC VR-613 / Malish 7).